Reading from the N-terminus, the 348-residue chain is Phosphoribosylformylglycinamidine cyclo-ligase (348 aa).

This sequence belongs to the AIR synthase family.

It localises to the cytoplasm. It carries out the reaction 2-formamido-N(1)-(5-O-phospho-beta-D-ribosyl)acetamidine + ATP = 5-amino-1-(5-phospho-beta-D-ribosyl)imidazole + ADP + phosphate + H(+). The protein operates within purine metabolism; IMP biosynthesis via de novo pathway; 5-amino-1-(5-phospho-D-ribosyl)imidazole from N(2)-formyl-N(1)-(5-phospho-D-ribosyl)glycinamide: step 2/2. The chain is Phosphoribosylformylglycinamidine cyclo-ligase from Aromatoleum aromaticum (strain DSM 19018 / LMG 30748 / EbN1) (Azoarcus sp. (strain EbN1)).